Here is a 220-residue protein sequence, read N- to C-terminus: Deoxyribose-phosphate aldolase (220 aa).

Residue aspartate 89 is the Proton donor/acceptor of the active site. Lysine 151 serves as the catalytic Schiff-base intermediate with acetaldehyde. The active-site Proton donor/acceptor is the lysine 180.

Belongs to the DeoC/FbaB aldolase family. DeoC type 1 subfamily.

The protein localises to the cytoplasm. It catalyses the reaction 2-deoxy-D-ribose 5-phosphate = D-glyceraldehyde 3-phosphate + acetaldehyde. It functions in the pathway carbohydrate degradation; 2-deoxy-D-ribose 1-phosphate degradation; D-glyceraldehyde 3-phosphate and acetaldehyde from 2-deoxy-alpha-D-ribose 1-phosphate: step 2/2. Functionally, catalyzes a reversible aldol reaction between acetaldehyde and D-glyceraldehyde 3-phosphate to generate 2-deoxy-D-ribose 5-phosphate. The sequence is that of Deoxyribose-phosphate aldolase from Streptococcus suis (strain 05ZYH33).